A 959-amino-acid polypeptide reads, in one-letter code: Glycine dehydrogenase (decarboxylating) (959 aa).

Residue K707 is modified to N6-(pyridoxal phosphate)lysine.

Belongs to the GcvP family. The glycine cleavage system is composed of four proteins: P, T, L and H. Requires pyridoxal 5'-phosphate as cofactor.

The enzyme catalyses N(6)-[(R)-lipoyl]-L-lysyl-[glycine-cleavage complex H protein] + glycine + H(+) = N(6)-[(R)-S(8)-aminomethyldihydrolipoyl]-L-lysyl-[glycine-cleavage complex H protein] + CO2. The glycine cleavage system catalyzes the degradation of glycine. The P protein binds the alpha-amino group of glycine through its pyridoxal phosphate cofactor; CO(2) is released and the remaining methylamine moiety is then transferred to the lipoamide cofactor of the H protein. This is Glycine dehydrogenase (decarboxylating) from Photobacterium profundum (strain SS9).